Reading from the N-terminus, the 372-residue chain is tRNA-specific 2-thiouridylase MnmA (372 aa).

ATP-binding positions include 16 to 23 (GMSGGVDS) and M42. Positions 102 to 104 (NPD) are interaction with target base in tRNA. The active-site Nucleophile is C107. Residues C107 and C205 are joined by a disulfide bond. ATP is bound at residue G132. Positions 155 to 157 (KDQ) are interaction with tRNA. C205 acts as the Cysteine persulfide intermediate in catalysis. Residues 317-318 (RY) are interaction with tRNA.

It belongs to the MnmA/TRMU family.

It localises to the cytoplasm. It catalyses the reaction S-sulfanyl-L-cysteinyl-[protein] + uridine(34) in tRNA + AH2 + ATP = 2-thiouridine(34) in tRNA + L-cysteinyl-[protein] + A + AMP + diphosphate + H(+). In terms of biological role, catalyzes the 2-thiolation of uridine at the wobble position (U34) of tRNA, leading to the formation of s(2)U34. The chain is tRNA-specific 2-thiouridylase MnmA from Shewanella sp. (strain ANA-3).